The primary structure comprises 928 residues: Chitin synthase 2 (928 aa).

Disordered stretches follow at residues 1-45 (MAYN…EAYA) and 110-179 (AYYT…SPAP). The segment covering 17-28 (PSAQPQYDSRSP) has biased composition (polar residues). Positions 130-140 (PSHDEPYRPDT) are enriched in basic and acidic residues. 9 helical membrane-spanning segments follow: residues 472–492 (SAFG…YVAL), 570–589 (WLNG…YQLW), 613–633 (LFAW…TASL), 644–664 (TVLG…CFIL), 678–698 (MMMV…SIFL), 723–743 (FFGL…ASFL), 753–773 (CFLQ…IYAF), 854–874 (VTAW…IAGF), and 893–913 (VILW…CWFL).

The protein belongs to the chitin synthase family. Class I subfamily.

It localises to the cell membrane. It catalyses the reaction [(1-&gt;4)-N-acetyl-beta-D-glucosaminyl](n) + UDP-N-acetyl-alpha-D-glucosamine = [(1-&gt;4)-N-acetyl-beta-D-glucosaminyl](n+1) + UDP + H(+). Polymerizes chitin, a structural polymer of the cell wall and septum, by transferring the sugar moiety of UDP-GlcNAc to the non-reducing end of the growing chitin polymer. CHS2 plays a synergistic role to CHS1 in normal yeast cell reproductive growth, even if this role is less predominant than for CHS1. With CHS3, plays an important role in virulence. This chain is Chitin synthase 2, found in Exophiala dermatitidis (Black yeast-like fungus).